A 176-amino-acid polypeptide reads, in one-letter code: Tubulin polymerization-promoting protein family member 3 (176 aa).

Ala-2 is subject to N-acetylalanine. The interval 132 to 152 is disordered; sequence TGSHKERFDESGKGKGIAGRQ. Residues 134-144 are compositionally biased toward basic and acidic residues; the sequence is SHKERFDESGK.

It belongs to the TPPP family.

It is found in the cytoplasm. The protein resides in the cytoskeleton. Functionally, regulator of microtubule dynamic that has microtubule bundling activity. Required for embryo implantation; possibly by regulating beta-catenin. Also required for decidualization via regulation of beta-catenin. The sequence is that of Tubulin polymerization-promoting protein family member 3 from Mus musculus (Mouse).